Consider the following 695-residue polypeptide: Exocyst complex component EXO70C2 (695 aa).

A compositionally biased stretch (basic and acidic residues) spans 1–36; the sequence is MEKNDKDPDHDDKSKGDEKGDVVSDAHPSDDAHHQD. Disordered regions lie at residues 1-71 and 210-229; these read MEKN…EEAP and VVTD…QDHQ. Thr-212 is subject to Phosphothreonine. 2 positions are modified to phosphoserine: Ser-215 and Ser-217. Thr-446 is subject to Phosphothreonine. A phosphoserine mark is found at Ser-494 and Ser-605.

It belongs to the EXO70 family. Interacts with ROH1A and ROH1D independently of its phosphorylation status. In terms of processing, phosphorylation on Ser and Thr residues promotes its ability to repress pollen tube growth and to regulate cellular architecture at the pollen tube tip. In terms of tissue distribution, expressed in anthers, pollen and root trichoblast cells. Also observed in anther tapetum.

It is found in the cytoplasm. Its function is as follows. Required for optimal tip growth of pollen tube; dose-dependent negative regulator of exocyst function in pollen tube growth and cellular architecture at the pollen tube tip, probably by modulating membrane trafficking and exocytosis dynamics. This Arabidopsis thaliana (Mouse-ear cress) protein is Exocyst complex component EXO70C2.